Reading from the N-terminus, the 219-residue chain is MFYSHLLFFTFTFACSSSLNRKTKREMDLEDIILDTCHQKAVCAHIQMHLKETYVDELCKCGGGQECPLHWDPNDGHSITLAYNQWKFCSPTSQDLPVCTREQTAREFSYDMKPVSKKVQMFMFFNCLCPENHFYEFFNEREEETGGGQLAIIEERCEKMKQCEKTQICQKIETLQGKFLFKHVKCFCPGDQNCNDDLKKADAIDVGDDGSVQHYMKCH.

An N-terminal signal peptide occupies residues 1–16 (MFYSHLLFFTFTFACS). The propeptide occupies 17-25 (SSLNRKTKR).

Post-translationally, contains 8 disulfide bonds. Expressed by the venom gland.

The protein resides in the secreted. Voltage-gated potassium channel inhibitor. This is Kappa-scoloptoxin(11)-Ss1a from Scolopendra dehaani (Thai centipede).